A 316-amino-acid chain; its full sequence is Arginase-1 (316 aa).

A disordered region spans residues 1-26 (MAKERHSVGVIGAPFSKGQPRRGVEE). 4 residues coordinate Mn(2+): His101, Asp124, His126, and Asp128. Substrate contacts are provided by residues 126-130 (HADIN), 137-139 (CGN), and Asp183. Residues Asp232 and Asp234 each coordinate Mn(2+). Thr246 lines the substrate pocket.

It belongs to the arginase family. Homotrimer. Mn(2+) serves as cofactor. As to expression, strongest expression in liver.

It carries out the reaction L-arginine + H2O = urea + L-ornithine. The protein operates within nitrogen metabolism; urea cycle; L-ornithine and urea from L-arginine: step 1/1. The polypeptide is Arginase-1 (arg1) (Xenopus laevis (African clawed frog)).